A 290-amino-acid chain; its full sequence is N-acetylmannosamine kinase (290 aa).

ATP is bound by residues Ala-6–Lys-13 and Gly-132–Leu-139. Positions 156, 166, 168, and 173 each coordinate Zn(2+).

This sequence belongs to the ROK (NagC/XylR) family. NanK subfamily. In terms of assembly, homodimer.

It catalyses the reaction an N-acyl-D-mannosamine + ATP = an N-acyl-D-mannosamine 6-phosphate + ADP + H(+). It participates in amino-sugar metabolism; N-acetylneuraminate degradation; D-fructose 6-phosphate from N-acetylneuraminate: step 2/5. In terms of biological role, catalyzes the phosphorylation of N-acetylmannosamine (ManNAc) to ManNAc-6-P. The chain is N-acetylmannosamine kinase from Yersinia pseudotuberculosis serotype O:1b (strain IP 31758).